Consider the following 693-residue polypeptide: E3 ubiquitin-protein ligase MARCHF7 (693 aa).

Met1 carries the N-acetylmethionine modification. Disordered stretches follow at residues Met1–Ser43, Glu69–Phe136, Leu158–Thr281, Phe296–Ala342, Leu361–Asn430, Ala445–Gly475, and Trp512–Leu533. Composition is skewed to polar residues over residues Val14–Ser36, Ser95–Gly105, Leu112–Val132, Asp167–Gln184, and Ala192–Pro215. The segment covering Ser216–Ser234 has biased composition (low complexity). Residues Ser236 to Arg267 show a composition bias toward polar residues. A compositionally biased stretch (basic and acidic residues) spans Pro268–Arg279. Residues Phe296 to Ser305 show a composition bias toward low complexity. Over residues Leu306 to Thr323 the composition is skewed to polar residues. A Phosphoserine modification is found at Ser318. The segment covering Ser324 to Val337 has biased composition (low complexity). At Ser390 the chain carries Phosphoserine. The span at Ala451–Ser463 shows a compositional bias: low complexity. Basic and acidic residues predominate over residues Gly517 to Leu533. An RING-CH-type zinc finger spans residues Asp546 to Asn616. Residues Cys554, Cys557, Cys572, Cys574, His582, Cys585, Cys606, and Cys609 each coordinate Zn(2+). Position 688 is a phosphothreonine (Thr688). Residue Ser689 is modified to Phosphoserine.

As to expression, expressed in brain, thymus, muscle and kidney.

It localises to the cytoplasm. It catalyses the reaction S-ubiquitinyl-[E2 ubiquitin-conjugating enzyme]-L-cysteine + [acceptor protein]-L-lysine = [E2 ubiquitin-conjugating enzyme]-L-cysteine + N(6)-ubiquitinyl-[acceptor protein]-L-lysine.. Its pathway is protein modification; protein ubiquitination. Its function is as follows. E3 ubiquitin-protein ligase which may specifically enhance the E2 activity of HIP2. E3 ubiquitin ligases accept ubiquitin from an E2 ubiquitin-conjugating enzyme in the form of a thioester and then directly transfer the ubiquitin to targeted substrates. May be involved in T-cell proliferation by regulating LIF secretion. May play a role in lysosome homeostasis. Promotes 'Lys-6', 'Lys-11' and 'Lys-63'-linked mixed polyubiquitination on ATG14 leading to the inhibition of autophagy by impairing the interaction between ATG14 and STX7. Participates in the dopamine-mediated negative regulation of the NLRP3 inflammasome by promoting its uibiquitination and subsequent degradation. The protein is E3 ubiquitin-protein ligase MARCHF7 (Marchf7) of Mus musculus (Mouse).